Reading from the N-terminus, the 739-residue chain is Ankyrin repeat and SAM domain-containing protein 6 (739 aa).

8 ANK repeats span residues 1-30, 57-86, 91-120, 124-156, 158-188, 192-221, 226-255, and 259-290; these read MGAS…FVDD, LEVR…DARV, TGWS…DPDH, LGNT…RPDD, KKRP…QVDV, DGAS…DVDR, HGWT…DVQL, and NGYT…LVDK. A compositionally biased stretch (basic residues) spans 295-305; it reads QRGKSALRRRA. Disordered stretches follow at residues 295–320 and 449–645; these read QRGK…TGLK and LRDA…ITDE. A compositionally biased stretch (polar residues) spans 462-478; it reads PGRSSAGSDTASISRVV. Composition is skewed to low complexity over residues 490–506 and 582–592; these read GPSP…HSSG and SSRSKSTSPTL. Over residues 593-603 the composition is skewed to pro residues; it reads TPSPSPTPAHT. A compositionally biased stretch (low complexity) spans 604–641; the sequence is PAPAHTPAHRPTGASADSQGSASTQQRSRSSGGSSSGT. The SAM domain maps to 643 to 706; the sequence is TDEDELSGIL…LAAISELNAG (64 aa).

Its subcellular location is the cell projection. It is found in the cilium. Its function is as follows. Required for renal function. In Danio rerio (Zebrafish), this protein is Ankyrin repeat and SAM domain-containing protein 6 (anks6).